A 475-amino-acid chain; its full sequence is ESX-3 secretion system protein EccD3 (475 aa).

11 helical membrane passes run Ile-132–Val-152, Leu-161–Val-181, Ala-186–Leu-206, Phe-212–Met-232, Ile-241–Ala-261, Trp-264–Val-284, Gly-333–Ala-353, Asn-354–Ala-374, Ala-384–Gly-404, Ala-409–Leu-429, and Gly-453–Leu-473.

The protein belongs to the EccD/Snm4 family. As to quaternary structure, part of the ESX-3 / type VII secretion system (T7SS), which is composed of cytosolic and membrane components. The ESX-3 membrane complex is composed of EccB3, EccC3, EccD3 and EccE3.

Its subcellular location is the cell inner membrane. Functionally, part of the ESX-3 specialized secretion system, which is required for siderophore-mediated iron acquisition and for the secretion of EsxH and EsxG. In Mycolicibacterium smegmatis (strain ATCC 700084 / mc(2)155) (Mycobacterium smegmatis), this protein is ESX-3 secretion system protein EccD3.